Reading from the N-terminus, the 236-residue chain is MICOS complex subunit MIC25 (236 aa).

Positions Met-1 to Arg-11 are enriched in basic and acidic residues. The segment at Met-1 to Val-22 is disordered. Gly-2 is lipidated: N-myristoyl glycine. Phosphoserine is present on residues Ser-13 and Ser-31. Disordered stretches follow at residues Val-34–Asp-86 and Glu-109–Lys-132. The span at Gly-48–Gly-58 shows a compositional bias: low complexity. Basic and acidic residues-rich tracts occupy residues Gly-62 to Arg-71 and Arg-122 to Lys-132. Residues Gly-127–Asn-167 are a coiled coil. The 42-residue stretch at Glu-195–Gly-236 folds into the CHCH domain. 2 consecutive short sequence motifs (cx9C motif) follow at residues Cys-198–Cys-208 and Cys-219–Cys-229. Disulfide bonds link Cys-198/Cys-229 and Cys-208/Cys-219.

Belongs to the MICOS complex subunit Mic19 family. Metazoan Mic25 subfamily. In terms of assembly, component of the mitochondrial contact site and cristae organizing system (MICOS) complex, composed of at least MICOS10/MIC10, CHCHD3/MIC19, CHCHD6/MIC25, APOOL/MIC27, IMMT/MIC60, APOO/MIC23/MIC26 and MICOS13/MIC13. This complex was also known under the names MINOS or MitOS complex. The MICOS complex associates with mitochondrial outer membrane proteins SAMM50, MTX1 and MTX2 (together described as components of the mitochondrial outer membrane sorting assembly machinery (SAM) complex) and DNAJC11, mitochondrial inner membrane protein TMEM11 and with HSPA9. The MICOS and SAM complexes together with DNAJC11 are part of a large protein complex spanning both membranes termed the mitochondrial intermembrane space bridging (MIB) complex. Interacts with DISC1. Interacts with IMMT/MIC60.

It localises to the mitochondrion inner membrane. The protein localises to the mitochondrion. Its function is as follows. Component of the MICOS complex, a large protein complex of the mitochondrial inner membrane that plays crucial roles in the maintenance of crista junctions, inner membrane architecture, and formation of contact sites to the outer membrane. The sequence is that of MICOS complex subunit MIC25 (CHCHD6) from Bos taurus (Bovine).